Here is a 280-residue protein sequence, read N- to C-terminus: Probable endonuclease 4 (280 aa).

Zn(2+) is bound by residues His-69, His-109, Glu-145, Asp-179, His-182, His-216, Asp-229, His-231, and Glu-261.

Belongs to the AP endonuclease 2 family. Requires Zn(2+) as cofactor.

The catalysed reaction is Endonucleolytic cleavage to 5'-phosphooligonucleotide end-products.. Functionally, endonuclease IV plays a role in DNA repair. It cleaves phosphodiester bonds at apurinic or apyrimidinic (AP) sites, generating a 3'-hydroxyl group and a 5'-terminal sugar phosphate. In Actinobacillus pleuropneumoniae serotype 7 (strain AP76), this protein is Probable endonuclease 4.